The primary structure comprises 440 residues: Transposon Ty1-OL Gag polyprotein (440 aa).

Polar residues-rich tracts occupy residues 1–23 (MESQQLSNYPQISHGSACASVTS), 48–60 (TKANSQQTTTPAS), and 127–152 (QSQFPQYPSSVGTPLSTPSPESGNTF). 3 disordered regions span residues 1–93 (MESQ…MMTQ), 126–173 (PQSQ…RPPP), and 352–440 (GSRN…PGTY). The span at 153-165 (TDSSSADSDMTST) shows a compositional bias: low complexity. The interval 299–401 (NNGIHINNKV…NSKSKTARAH (103 aa)) is RNA-binding. Low complexity predominate over residues 402–418 (NVSTSNNSPSTDNDSIS). Serine 416 carries the post-translational modification Phosphoserine. A compositionally biased stretch (polar residues) spans 419–428 (KSTTEPIQLN). Residues 429–440 (NKHDLHLRPGTY) are compositionally biased toward basic and acidic residues.

Homotrimer.

It is found in the cytoplasm. Its function is as follows. Capsid protein (CA) is the structural component of the virus-like particle (VLP), forming the shell that encapsulates the retrotransposons dimeric RNA genome. The particles are assembled from trimer-clustered units and there are holes in the capsid shells that allow for the diffusion of macromolecules. CA also has nucleocapsid-like chaperone activity, promoting primer tRNA(i)-Met annealing to the multipartite primer-binding site (PBS), dimerization of Ty1 RNA and initiation of reverse transcription. The protein is Transposon Ty1-OL Gag polyprotein (TY1A-OL) of Saccharomyces cerevisiae (strain ATCC 204508 / S288c) (Baker's yeast).